The chain runs to 290 residues: MRIADYSVTKAVLERHGFTFKKSFGQNFLTDTNILQKIVDTAEIDDQVNVIEIGPGIGALTEFLAERAAQVMAFEIDHRLVPILADTLRDFDNVTVVNEDILKVDLAQHIQNFKNPNLPIKVVANLPYYITTPILMHLIESGIPFSEFVVMMQKEVADRISAQPNTKAYGSLSIAVQYYMTAKVAFIVPRTVFVPAPNVDSAILKMVRRPEPAVAVEDENFFFKVSKASFTHRRKTLWNNLTGYFGKTEEVKDKLTKALDQAGLSPSVRGEALSLAEFAGLADALKGQGL.

Residues N27, L29, G54, E75, D100, and N125 each contribute to the S-adenosyl-L-methionine site.

This sequence belongs to the class I-like SAM-binding methyltransferase superfamily. rRNA adenine N(6)-methyltransferase family. RsmA subfamily.

Its subcellular location is the cytoplasm. It catalyses the reaction adenosine(1518)/adenosine(1519) in 16S rRNA + 4 S-adenosyl-L-methionine = N(6)-dimethyladenosine(1518)/N(6)-dimethyladenosine(1519) in 16S rRNA + 4 S-adenosyl-L-homocysteine + 4 H(+). Its function is as follows. Specifically dimethylates two adjacent adenosines (A1518 and A1519) in the loop of a conserved hairpin near the 3'-end of 16S rRNA in the 30S particle. May play a critical role in biogenesis of 30S subunits. This Streptococcus pneumoniae (strain ATCC BAA-255 / R6) protein is Ribosomal RNA small subunit methyltransferase A.